Reading from the N-terminus, the 209-residue chain is Ubiquitin-conjugating enzyme E2 S (209 aa).

One can recognise a UBC core domain in the interval 14–160 (QTIRQVMREL…ARMMTEIHAQ (147 aa)). The active-site Glycyl thioester intermediate is the cysteine 98. A disordered region spans residues 164 to 209 (CAAGAAGDSKDDDGPSTKKHAGLDKKLQDKKKEKLLKEKKRMLKRL). A compositionally biased stretch (basic and acidic residues) spans 171 to 199 (DSKDDDGPSTKKHAGLDKKLQDKKKEKLL). Basic residues predominate over residues 200 to 209 (KEKKRMLKRL).

This sequence belongs to the ubiquitin-conjugating enzyme family.

It carries out the reaction S-ubiquitinyl-[E1 ubiquitin-activating enzyme]-L-cysteine + [E2 ubiquitin-conjugating enzyme]-L-cysteine = [E1 ubiquitin-activating enzyme]-L-cysteine + S-ubiquitinyl-[E2 ubiquitin-conjugating enzyme]-L-cysteine.. The protein operates within protein modification; protein ubiquitination. Catalyzes the covalent attachment of ubiquitin to other proteins. Acts as an essential factor of the anaphase promoting complex/cyclosome (APC/C), a cell cycle-regulated ubiquitin ligase that controls progression through mitosis. Acts by specifically elongating polyubiquitin chains initiated by the E2 enzyme vih/UbcH10 on APC/C substrates, enhancing the degradation of APC/C substrates by the proteasome and promoting mitotic exit. The protein is Ubiquitin-conjugating enzyme E2 S of Drosophila ananassae (Fruit fly).